Reading from the N-terminus, the 943-residue chain is MTQDYKATLHLPATDFPMRGDLPKREPAMLERWEREGLYAQVRANAAGRPLFVLHDGPPYANGQIHLGHAVNKILKDIIVKSKYLAGFDAPYIPGWDCHGLPIEIAIEKKFGKVGVKLDAAQFRQKCREYATEQIDLQRRDFKRLGVIGDWDNPYKTLDFRFEANEIRALAKVIDNGHLTRGVKPVHWCFDCGSALAEAEIEYADKLSPTVDIAYPARDPAAIAAAFGVTLPAGTQVAVPIWTTTPWTLPASLAVSLGAELDYVLVEGPADRGQPRWLVIAEALAGKALARYGVEAVVVHGHAKGAALDQLLLAHPFYAERDIPLILGDHVSDDDGTGAVHTAPGHGQEDYQVSKQYGLLERYSAAQINPIDGRGVYLPSTPPLGDTVLAGLHIWKANDVIIDALRDTGVLLAASTMEHSYPHCWRHKTPIAFRATPQWFISMEQANLRADALKAIETVHWYPSWGQARIAGMIDGRPDWTISRQRTWGVPIALFVHRETGEPHPRSTELMRQVAERVEQGGVDVWYTLDAAELLGDEAGDYDKITDILDVWFDSGVTHEAVLVDRGLPKPADLYLEGSDQHRGWFQSSLLTGVAMDKVAPYKQCLTHGFTVDEHGRKMSKSLGNGIEPQEIMRTLGADILRLWIASADYSNEMSLSQEILKRNADAYRRLRNTARFLLGNLHGFDPLQHLVALDDMVLLDRWIVHRAHELQEKITAAYARYDFAEIVQALLNFCSVDLGSLYLDVTKDRLYTMAEDARGRRSAQSAMYHVAEAFVRWIAPVLSFTAEELWAYLPGEHSGNVLFATWYDGLAPMPADAALTSADVDKLLALREQVAKVLEPMRANGAIGAALEAEITVAADAQTAARWQPLSDELRFLFISGDVTVTAASTDDIFVSAQPTTKAKCVRCWHHQASVGSDPRHPELCSRCVSNIEGPGEERRWF.

A 'HIGH' region motif is present at residues 59-69; that stretch reads PYANGQIHLGH. Glu-577 provides a ligand contact to L-isoleucyl-5'-AMP. The short motif at 618–622 is the 'KMSKS' region element; it reads KMSKS. Lys-621 serves as a coordination point for ATP. Residues Cys-906, Cys-909, Cys-926, and Cys-929 each coordinate Zn(2+).

It belongs to the class-I aminoacyl-tRNA synthetase family. IleS type 1 subfamily. As to quaternary structure, monomer. Requires Zn(2+) as cofactor.

The protein localises to the cytoplasm. It catalyses the reaction tRNA(Ile) + L-isoleucine + ATP = L-isoleucyl-tRNA(Ile) + AMP + diphosphate. Its function is as follows. Catalyzes the attachment of isoleucine to tRNA(Ile). As IleRS can inadvertently accommodate and process structurally similar amino acids such as valine, to avoid such errors it has two additional distinct tRNA(Ile)-dependent editing activities. One activity is designated as 'pretransfer' editing and involves the hydrolysis of activated Val-AMP. The other activity is designated 'posttransfer' editing and involves deacylation of mischarged Val-tRNA(Ile). The chain is Isoleucine--tRNA ligase from Xanthomonas campestris pv. campestris (strain 8004).